Consider the following 286-residue polypeptide: MDQKMINLATEAGAIEIANDKPFVLFGGMNVLESRDLAMSIAEHYVEVTQKLGIPYVFKASFDKANRSSVNSYRGPGMEEGLKIFEEIKRTFNVPLITDVHEVHQCAPVAEVVDIIQLPAFLARQTDLVVAMAKTGAIINVKKPQFLAPHEMRHIVTKFNEAGNDKIILCERGSSFGYNNLVVDMLGMDDMKKTGYPVIFDATHALQRPGGRADSAGGRRAQATELARSGMALGIAGLFIEAHPDPDNAKCDGPCALPLHQLENYLKQMKAVDDLVKSFAPIDTSK.

The protein belongs to the KdsA family.

The protein localises to the cytoplasm. The catalysed reaction is D-arabinose 5-phosphate + phosphoenolpyruvate + H2O = 3-deoxy-alpha-D-manno-2-octulosonate-8-phosphate + phosphate. It participates in carbohydrate biosynthesis; 3-deoxy-D-manno-octulosonate biosynthesis; 3-deoxy-D-manno-octulosonate from D-ribulose 5-phosphate: step 2/3. The protein operates within bacterial outer membrane biogenesis; lipopolysaccharide biosynthesis. The polypeptide is 2-dehydro-3-deoxyphosphooctonate aldolase (Shewanella denitrificans (strain OS217 / ATCC BAA-1090 / DSM 15013)).